Consider the following 213-residue polypeptide: Phosphoheptose isomerase (213 aa).

In terms of domain architecture, SIS spans 50–208 (MAETFEGGGR…IDLVERMLGY (159 aa)). 65–67 (NGG) is a substrate binding site. Zn(2+) contacts are provided by histidine 74 and glutamate 78. Residues glutamate 78, 109–110 (ND), 135–137 (STS), serine 140, and glutamine 188 each bind substrate. Glutamine 188 and histidine 196 together coordinate Zn(2+).

It belongs to the SIS family. GmhA subfamily. It depends on Zn(2+) as a cofactor.

The protein localises to the cytoplasm. The catalysed reaction is 2 D-sedoheptulose 7-phosphate = D-glycero-alpha-D-manno-heptose 7-phosphate + D-glycero-beta-D-manno-heptose 7-phosphate. The protein operates within carbohydrate biosynthesis; D-glycero-D-manno-heptose 7-phosphate biosynthesis; D-glycero-alpha-D-manno-heptose 7-phosphate and D-glycero-beta-D-manno-heptose 7-phosphate from sedoheptulose 7-phosphate: step 1/1. Functionally, catalyzes the isomerization of sedoheptulose 7-phosphate in D-glycero-D-manno-heptose 7-phosphate. In Chlorobium phaeovibrioides (strain DSM 265 / 1930) (Prosthecochloris vibrioformis (strain DSM 265)), this protein is Phosphoheptose isomerase.